We begin with the raw amino-acid sequence, 381 residues long: MTETQSLELAKELISRPSVTPDDRDCQKLLAERLHKIGFAAEELHFGDTKNIWLRRGTKAPVVCFAGHTDVVPTGPVEKWDSPPFEPAERDGRLYGRGAADMKTSIACFVTACERFVAKHPNHQGSIALLITSDEEGDALDGTTKVVDVLKARDELIDYCIVGEPTAVDKLGDMIKNGRRGSLSGNLTVKGKQGHIAYPHLAINPVHTFAPALLELTQEVWDEGNEYFPPTSFQISNINGGTGATNVIPGELNVKFNFRFSTESTEAGLKQRVHAILDKHGVQYDLQWSCSGQPFLTQAGKLTDVARAAIAETCGIEAELSTTGGTSDGRFIKAIAQELIELGPSNATIHQINENVRLNDIPKLSAVYEGILARLLAGNAV.

His-68 lines the Zn(2+) pocket. Asp-70 is an active-site residue. Position 101 (Asp-101) interacts with Zn(2+). Glu-135 (proton acceptor) is an active-site residue. Positions 136, 164, and 350 each coordinate Zn(2+).

This sequence belongs to the peptidase M20A family. DapE subfamily. In terms of assembly, homodimer. Zn(2+) serves as cofactor. Co(2+) is required as a cofactor.

The catalysed reaction is N-succinyl-(2S,6S)-2,6-diaminopimelate + H2O = (2S,6S)-2,6-diaminopimelate + succinate. The protein operates within amino-acid biosynthesis; L-lysine biosynthesis via DAP pathway; LL-2,6-diaminopimelate from (S)-tetrahydrodipicolinate (succinylase route): step 3/3. Its function is as follows. Catalyzes the hydrolysis of N-succinyl-L,L-diaminopimelic acid (SDAP), forming succinate and LL-2,6-diaminopimelate (DAP), an intermediate involved in the bacterial biosynthesis of lysine and meso-diaminopimelic acid, an essential component of bacterial cell walls. This is Succinyl-diaminopimelate desuccinylase (dapE) from Neisseria meningitidis serogroup B (strain ATCC BAA-335 / MC58).